The primary structure comprises 383 residues: Acetylornithine deacetylase (383 aa).

Residue H80 participates in Zn(2+) binding. The active site involves D82. Position 112 (D112) interacts with Zn(2+). Residue E144 is part of the active site. The Zn(2+) site is built by E145, E169, and H355.

This sequence belongs to the peptidase M20A family. ArgE subfamily. Homodimer. The cofactor is Zn(2+). Co(2+) is required as a cofactor. Glutathione serves as cofactor.

It is found in the cytoplasm. The catalysed reaction is N(2)-acetyl-L-ornithine + H2O = L-ornithine + acetate. Its pathway is amino-acid biosynthesis; L-arginine biosynthesis; L-ornithine from N(2)-acetyl-L-ornithine (linear): step 1/1. Its function is as follows. Catalyzes the hydrolysis of the amide bond of N(2)-acetylated L-amino acids. Cleaves the acetyl group from N-acetyl-L-ornithine to form L-ornithine, an intermediate in L-arginine biosynthesis pathway, and a branchpoint in the synthesis of polyamines. The sequence is that of Acetylornithine deacetylase from Salmonella arizonae (strain ATCC BAA-731 / CDC346-86 / RSK2980).